A 69-amino-acid polypeptide reads, in one-letter code: Small ribosomal subunit protein bS21 (69 aa).

It belongs to the bacterial ribosomal protein bS21 family.

The chain is Small ribosomal subunit protein bS21 from Borrelia duttonii (strain Ly).